Reading from the N-terminus, the 181-residue chain is Macro domain-containing protein in sno 5'region (181 aa).

The 172-residue stretch at 1-172 folds into the Macro domain; the sequence is MTTITLVQGD…TFARELGDAG (172 aa).

The protein belongs to the MacroD-type family.

The polypeptide is Macro domain-containing protein in sno 5'region (Streptomyces nogalater).